The sequence spans 254 residues: uncharacterized protein (254 aa).

The 234-residue stretch at Leu-6 to Ala-239 folds into the ABC transporter domain. Gly-38–Ser-45 contacts ATP.

This sequence belongs to the ABC transporter superfamily.

This is an uncharacterized protein from Methanocaldococcus jannaschii (strain ATCC 43067 / DSM 2661 / JAL-1 / JCM 10045 / NBRC 100440) (Methanococcus jannaschii).